The following is a 205-amino-acid chain: Small ribosomal subunit protein uS4 (205 aa).

Residues 95–156 enclose the S4 RNA-binding domain; sequence SRLDNIVYRM…KTIKIPIVKA (62 aa).

The protein belongs to the universal ribosomal protein uS4 family. As to quaternary structure, part of the 30S ribosomal subunit. Contacts protein S5. The interaction surface between S4 and S5 is involved in control of translational fidelity.

Functionally, one of the primary rRNA binding proteins, it binds directly to 16S rRNA where it nucleates assembly of the body of the 30S subunit. In terms of biological role, with S5 and S12 plays an important role in translational accuracy. The sequence is that of Small ribosomal subunit protein uS4 from Mycoplasma pneumoniae (strain ATCC 29342 / M129 / Subtype 1) (Mycoplasmoides pneumoniae).